A 261-amino-acid chain; its full sequence is MTVLQAIVLGLVQGVGEFLPISSSAHLILTPWFFRWPDPGLTFDVALHLGTLIAVVAYFWRDIIELVLSGLGQPRSQDGRLFWYLIVASIPGAIFGVLFEKQAETIFRSPLLIALTLTLMGLGLWWADRVGRKRRQLDDVNLFDGIIVGISQALAIIPGVSRSGITMTAGLLTGMERETAARFSFLMSVPIIAGAALLKLKELPLHEVNLAFIAGVLTAAVVGFLAIKFLLQYLRRGSYLLFTGYRILLAALIVAVFWLRR.

A run of 8 helical transmembrane segments spans residues methionine 1 to isoleucine 21, glycine 40 to tryptophan 60, glycine 79 to phenylalanine 99, isoleucine 106 to tryptophan 126, valine 140 to valine 160, phenylalanine 185 to leucine 205, leucine 210 to leucine 230, and tyrosine 239 to leucine 259.

The protein belongs to the UppP family.

Its subcellular location is the cell membrane. It carries out the reaction di-trans,octa-cis-undecaprenyl diphosphate + H2O = di-trans,octa-cis-undecaprenyl phosphate + phosphate + H(+). Its function is as follows. Catalyzes the dephosphorylation of undecaprenyl diphosphate (UPP). Confers resistance to bacitracin. This chain is Undecaprenyl-diphosphatase, found in Moorella thermoacetica (strain ATCC 39073 / JCM 9320).